We begin with the raw amino-acid sequence, 508 residues long: 2,3-bisphosphoglycerate-independent phosphoglycerate mutase (508 aa).

Mn(2+) is bound by residues D13 and S63. Residue S63 is the Phosphoserine intermediate of the active site. Residues H122, 152–153 (RD), R184, R190, 256–259 (RADR), and K330 contribute to the substrate site. Mn(2+) contacts are provided by D397, H401, D438, H439, and H457.

It belongs to the BPG-independent phosphoglycerate mutase family. Monomer. The cofactor is Mn(2+).

The enzyme catalyses (2R)-2-phosphoglycerate = (2R)-3-phosphoglycerate. It participates in carbohydrate degradation; glycolysis; pyruvate from D-glyceraldehyde 3-phosphate: step 3/5. Its function is as follows. Catalyzes the interconversion of 2-phosphoglycerate and 3-phosphoglycerate. The chain is 2,3-bisphosphoglycerate-independent phosphoglycerate mutase from Laribacter hongkongensis (strain HLHK9).